The following is a 120-amino-acid chain: NAD(P)H-quinone oxidoreductase subunit 3, chloroplastic (120 aa).

A run of 3 helical transmembrane segments spans residues 9–29 (IFWTFLIIASLIPILAFWISG), 64–84 (MFALVFVVFDVETVFLYPWAM), and 88–108 (VLGVSVFIEAFIFVLILVVGL).

This sequence belongs to the complex I subunit 3 family. In terms of assembly, NDH is composed of at least 16 different subunits, 5 of which are encoded in the nucleus.

It localises to the plastid. Its subcellular location is the chloroplast thylakoid membrane. It carries out the reaction a plastoquinone + NADH + (n+1) H(+)(in) = a plastoquinol + NAD(+) + n H(+)(out). The catalysed reaction is a plastoquinone + NADPH + (n+1) H(+)(in) = a plastoquinol + NADP(+) + n H(+)(out). Its function is as follows. NDH shuttles electrons from NAD(P)H:plastoquinone, via FMN and iron-sulfur (Fe-S) centers, to quinones in the photosynthetic chain and possibly in a chloroplast respiratory chain. The immediate electron acceptor for the enzyme in this species is believed to be plastoquinone. Couples the redox reaction to proton translocation, and thus conserves the redox energy in a proton gradient. The protein is NAD(P)H-quinone oxidoreductase subunit 3, chloroplastic of Brachypodium distachyon (Purple false brome).